Consider the following 93-residue polypeptide: Ferredoxin-2 (93 aa).

One can recognise a 2Fe-2S ferredoxin-type domain in the interval 2–91; the sequence is YKVTLKTPDG…DVVIETHKED (90 aa). The [2Fe-2S] cluster site is built by cysteine 37, cysteine 42, cysteine 45, and cysteine 75.

Belongs to the 2Fe2S plant-type ferredoxin family. It depends on [2Fe-2S] cluster as a cofactor.

Its subcellular location is the plastid. It localises to the chloroplast. Its function is as follows. Ferredoxins are iron-sulfur proteins that transfer electrons in a wide variety of metabolic reactions. This Equisetum arvense (Field horsetail) protein is Ferredoxin-2.